Reading from the N-terminus, the 223-residue chain is Phosphoribosylformylglycinamidine synthase subunit PurQ (223 aa).

In terms of domain architecture, Glutamine amidotransferase type-1 spans 3-223 (SAVVQLPGLN…FASALDVIAA (221 aa)). The active-site Nucleophile is the Cys-86. Residues His-196 and Glu-198 contribute to the active site.

In terms of assembly, part of the FGAM synthase complex composed of 1 PurL, 1 PurQ and 2 PurS subunits.

The protein resides in the cytoplasm. It carries out the reaction N(2)-formyl-N(1)-(5-phospho-beta-D-ribosyl)glycinamide + L-glutamine + ATP + H2O = 2-formamido-N(1)-(5-O-phospho-beta-D-ribosyl)acetamidine + L-glutamate + ADP + phosphate + H(+). The enzyme catalyses L-glutamine + H2O = L-glutamate + NH4(+). It participates in purine metabolism; IMP biosynthesis via de novo pathway; 5-amino-1-(5-phospho-D-ribosyl)imidazole from N(2)-formyl-N(1)-(5-phospho-D-ribosyl)glycinamide: step 1/2. Functionally, part of the phosphoribosylformylglycinamidine synthase complex involved in the purines biosynthetic pathway. Catalyzes the ATP-dependent conversion of formylglycinamide ribonucleotide (FGAR) and glutamine to yield formylglycinamidine ribonucleotide (FGAM) and glutamate. The FGAM synthase complex is composed of three subunits. PurQ produces an ammonia molecule by converting glutamine to glutamate. PurL transfers the ammonia molecule to FGAR to form FGAM in an ATP-dependent manner. PurS interacts with PurQ and PurL and is thought to assist in the transfer of the ammonia molecule from PurQ to PurL. This chain is Phosphoribosylformylglycinamidine synthase subunit PurQ, found in Rhizobium johnstonii (strain DSM 114642 / LMG 32736 / 3841) (Rhizobium leguminosarum bv. viciae).